Here is a 198-residue protein sequence, read N- to C-terminus: Recombination protein RecR (198 aa).

Residues 56 to 71 (CDICGNVSEEPTCRIC) form a C4-type zinc finger. The 97-residue stretch at 79–175 (AVVCVVEEPK…NVTRLASGLP (97 aa)) folds into the Toprim domain.

The protein belongs to the RecR family.

Functionally, may play a role in DNA repair. It seems to be involved in an RecBC-independent recombinational process of DNA repair. It may act with RecF and RecO. This is Recombination protein RecR from Saccharopolyspora erythraea (strain ATCC 11635 / DSM 40517 / JCM 4748 / NBRC 13426 / NCIMB 8594 / NRRL 2338).